The chain runs to 1941 residues: Integrin beta-like protein B (1941 aa).

The N-terminal stretch at 1 to 20 (MKNIIKYLFIFLCFLIITEA) is a signal peptide. At 21–1871 (THFRYGTISW…VTTQNSSNKT (1851 aa)) the chain is on the extracellular side. Residues 420-457 (YGDKCTVLPPCKNGVPNGGVNGDGKCLCNNGWTGSDCS) form the EGF-like domain. 2 disulfides stabilise this stretch: Cys-430–Cys-445 and Cys-447–Cys-456. The VWFA domain maps to 513–696 (DVYLLVDANM…AGIKAVSSKL (184 aa)). Asn-1400, Asn-1505, Asn-1530, Asn-1606, Asn-1652, Asn-1738, Asn-1777, Asn-1848, Asn-1866, and Asn-1869 each carry an N-linked (GlcNAc...) asparagine glycan. A helical membrane pass occupies residues 1872 to 1892 (VLSGAIAGAAAGTALIAAAMW). The Cytoplasmic segment spans residues 1893 to 1941 (KMLRKAAPPTDAFFDEGAFLGDGVNSNPMYQESKNGGENPLYLASNETL). A disordered region spans residues 1921–1941 (MYQESKNGGENPLYLASNETL).

This sequence belongs to the SIB family. In terms of assembly, interacts with talA/talin.

The protein localises to the membrane. Its function is as follows. Implicated in cellular adhesion. The polypeptide is Integrin beta-like protein B (sibB) (Dictyostelium discoideum (Social amoeba)).